The primary structure comprises 427 residues: Glucose-1-phosphate adenylyltransferase (427 aa).

Arg40, His46, and Arg52 together coordinate AMP. Tyr114 contributes to the alpha-D-glucose 1-phosphate binding site. Arg130 contributes to the AMP binding site. Alpha-D-glucose 1-phosphate is bound by residues Gly179, 194–195 (EK), and Ser212. Residue Arg386 participates in AMP binding.

The protein belongs to the bacterial/plant glucose-1-phosphate adenylyltransferase family. As to quaternary structure, homotetramer.

It carries out the reaction alpha-D-glucose 1-phosphate + ATP + H(+) = ADP-alpha-D-glucose + diphosphate. It functions in the pathway glycan biosynthesis; glycogen biosynthesis. With respect to regulation, allosterically activated by fructose-1,6-bisphosphate (F16BP) and inhibited by AMP. Its function is as follows. Involved in the biosynthesis of ADP-glucose, a building block required for the elongation reactions to produce glycogen. Catalyzes the reaction between ATP and alpha-D-glucose 1-phosphate (G1P) to produce pyrophosphate and ADP-Glc. The polypeptide is Glucose-1-phosphate adenylyltransferase (Cronobacter sakazakii (strain ATCC BAA-894) (Enterobacter sakazakii)).